We begin with the raw amino-acid sequence, 106 residues long: ATP-dependent Clp protease adapter protein ClpS (106 aa).

The interval 1 to 20 is disordered; sequence MKVDMSTSVKDDAQLEASRV.

The protein belongs to the ClpS family. Binds to the N-terminal domain of the chaperone ClpA.

In terms of biological role, involved in the modulation of the specificity of the ClpAP-mediated ATP-dependent protein degradation. The protein is ATP-dependent Clp protease adapter protein ClpS of Chromobacterium violaceum (strain ATCC 12472 / DSM 30191 / JCM 1249 / CCUG 213 / NBRC 12614 / NCIMB 9131 / NCTC 9757 / MK).